The primary structure comprises 278 residues: Urease accessory protein UreD (278 aa).

This sequence belongs to the UreD family. UreD, UreF and UreG form a complex that acts as a GTP-hydrolysis-dependent molecular chaperone, activating the urease apoprotein by helping to assemble the nickel containing metallocenter of UreC. The UreE protein probably delivers the nickel.

The protein resides in the cytoplasm. In terms of biological role, required for maturation of urease via the functional incorporation of the urease nickel metallocenter. This Staphylococcus epidermidis (strain ATCC 12228 / FDA PCI 1200) protein is Urease accessory protein UreD.